The sequence spans 290 residues: uncharacterized protein (290 aa).

This is an uncharacterized protein from Escherichia coli (strain K12).